Reading from the N-terminus, the 381-residue chain is Spermidine/putrescine import ATP-binding protein PotA (381 aa).

Positions 22–252 (VELRNVFKFF…PKTSFVADFI (231 aa)) constitute an ABC transporter domain. Position 54-61 (54-61 (GPSGCGKT)) interacts with ATP.

Belongs to the ABC transporter superfamily. Spermidine/putrescine importer (TC 3.A.1.11.1) family. As to quaternary structure, the complex is composed of two ATP-binding proteins (PotA), two transmembrane proteins (PotB and PotC) and a solute-binding protein (PotD).

The protein localises to the cell inner membrane. It carries out the reaction ATP + H2O + polyamine-[polyamine-binding protein]Side 1 = ADP + phosphate + polyamineSide 2 + [polyamine-binding protein]Side 1.. Its function is as follows. Part of the ABC transporter complex PotABCD involved in spermidine/putrescine import. Responsible for energy coupling to the transport system. The protein is Spermidine/putrescine import ATP-binding protein PotA of Nostoc sp. (strain PCC 7120 / SAG 25.82 / UTEX 2576).